Here is a 293-residue protein sequence, read N- to C-terminus: NAD kinase (293 aa).

D73 (proton acceptor) is an active-site residue. NAD(+) is bound by residues 73–74, H78, 147–148, R158, R175, D177, 188–193, and Q248; these read DG, ND, and TAYALS.

This sequence belongs to the NAD kinase family. Requires a divalent metal cation as cofactor.

The protein localises to the cytoplasm. The enzyme catalyses NAD(+) + ATP = ADP + NADP(+) + H(+). Functionally, involved in the regulation of the intracellular balance of NAD and NADP, and is a key enzyme in the biosynthesis of NADP. Catalyzes specifically the phosphorylation on 2'-hydroxyl of the adenosine moiety of NAD to yield NADP. This is NAD kinase from Nitrosococcus oceani (strain ATCC 19707 / BCRC 17464 / JCM 30415 / NCIMB 11848 / C-107).